The primary structure comprises 94 residues: Large ribosomal subunit protein bL25 (94 aa).

Belongs to the bacterial ribosomal protein bL25 family. Part of the 50S ribosomal subunit; part of the 5S rRNA/L5/L18/L25 subcomplex. Contacts the 5S rRNA. Binds to the 5S rRNA independently of L5 and L18.

In terms of biological role, this is one of the proteins that binds to the 5S RNA in the ribosome where it forms part of the central protuberance. This chain is Large ribosomal subunit protein bL25, found in Shigella boydii serotype 18 (strain CDC 3083-94 / BS512).